Reading from the N-terminus, the 126-residue chain is Protein ApaG (126 aa).

The ApaG domain maps to 2–126; that stretch reads SALDDSIRVE…FRLALPGLLH (125 aa).

The protein is Protein ApaG of Shewanella sp. (strain MR-4).